Reading from the N-terminus, the 236-residue chain is NAD(P)H-hydrate epimerase (236 aa).

One can recognise a YjeF N-terminal domain in the interval 11–217 (AAALDQELMS…AIASKYGFEV (207 aa)). Residue 61 to 65 (NNGGD) participates in (6S)-NADPHX binding. The K(+) site is built by Asn-62 and Asp-123. Residues 127–133 (GFSFSGE) and Asp-156 each bind (6S)-NADPHX. Ser-159 provides a ligand contact to K(+).

The protein belongs to the NnrE/AIBP family. K(+) is required as a cofactor.

Its subcellular location is the cytoplasm. The protein localises to the mitochondrion. It catalyses the reaction (6R)-NADHX = (6S)-NADHX. The enzyme catalyses (6R)-NADPHX = (6S)-NADPHX. Catalyzes the epimerization of the S- and R-forms of NAD(P)HX, a damaged form of NAD(P)H that is a result of enzymatic or heat-dependent hydration. This is a prerequisite for the S-specific NAD(P)H-hydrate dehydratase to allow the repair of both epimers of NAD(P)HX. The polypeptide is NAD(P)H-hydrate epimerase (Fusarium vanettenii (strain ATCC MYA-4622 / CBS 123669 / FGSC 9596 / NRRL 45880 / 77-13-4) (Fusarium solani subsp. pisi)).